We begin with the raw amino-acid sequence, 441 residues long: Methylenetetrahydrofolate--tRNA-(uracil-5-)-methyltransferase TrmFO (441 aa).

11-16 (GAGLAG) provides a ligand contact to FAD.

Belongs to the MnmG family. TrmFO subfamily. Requires FAD as cofactor.

It is found in the cytoplasm. The enzyme catalyses uridine(54) in tRNA + (6R)-5,10-methylene-5,6,7,8-tetrahydrofolate + NADH + H(+) = 5-methyluridine(54) in tRNA + (6S)-5,6,7,8-tetrahydrofolate + NAD(+). It catalyses the reaction uridine(54) in tRNA + (6R)-5,10-methylene-5,6,7,8-tetrahydrofolate + NADPH + H(+) = 5-methyluridine(54) in tRNA + (6S)-5,6,7,8-tetrahydrofolate + NADP(+). Its function is as follows. Catalyzes the folate-dependent formation of 5-methyl-uridine at position 54 (M-5-U54) in all tRNAs. This chain is Methylenetetrahydrofolate--tRNA-(uracil-5-)-methyltransferase TrmFO, found in Lactiplantibacillus plantarum (strain ATCC BAA-793 / NCIMB 8826 / WCFS1) (Lactobacillus plantarum).